Consider the following 335-residue polypeptide: V-set and immunoglobulin domain-containing protein 1 (335 aa).

The first 21 residues, 1–21 (MFPTMLKIFPILATLAGHVHG), serve as a signal peptide directing secretion. The region spanning 22-136 (VVVTVPEKTV…SQKSVIVNVL (115 aa)) is the Ig-like V-type domain. At 22–233 (VVVTVPEKTV…DLTSMHSDGN (212 aa)) the chain is on the extracellular side. Cystine bridges form between C43-C115 and C160-C210. Residues 139–226 (PSKPFCKIEG…GNSTCELDLT (88 aa)) form the Ig-like C2-type domain. The helical transmembrane segment at 234–254 (IVAGALIGAILAAVIICAIVW) threads the bilayer. Over 255–335 (VLTKKAKKKK…QKEETAGSSF (81 aa)) the chain is Cytoplasmic. The tract at residues 266–335 (SSNEMQVMAQ…QKEETAGSSF (70 aa)) is disordered. Residues 268–306 (NEMQVMAQKQSNAEYAQVPNEENTPATAVLPSNATNEQP) show a composition bias toward polar residues. Basic and acidic residues predominate over residues 319–335 (NDEKHEVQKEETAGSSF).

As to expression, expressed in thymocytes.

Its subcellular location is the membrane. In Gallus gallus (Chicken), this protein is V-set and immunoglobulin domain-containing protein 1 (VSIG1).